The following is a 485-amino-acid chain: UDP-N-acetylmuramate--L-alanine ligase (485 aa).

120 to 126 (GSHGKTT) provides a ligand contact to ATP.

This sequence belongs to the MurCDEF family.

The protein resides in the cytoplasm. It carries out the reaction UDP-N-acetyl-alpha-D-muramate + L-alanine + ATP = UDP-N-acetyl-alpha-D-muramoyl-L-alanine + ADP + phosphate + H(+). The protein operates within cell wall biogenesis; peptidoglycan biosynthesis. Functionally, cell wall formation. The polypeptide is UDP-N-acetylmuramate--L-alanine ligase (Rickettsia africae (strain ESF-5)).